Here is a 198-residue protein sequence, read N- to C-terminus: Recombination protein RecR (198 aa).

A C4-type zinc finger spans residues 57–72 (CSICGNLTDEDPCAIC). The region spanning 80–175 (STILIVEDSR…KVTRLARGLA (96 aa)) is the Toprim domain.

The protein belongs to the RecR family.

Its function is as follows. May play a role in DNA repair. It seems to be involved in an RecBC-independent recombinational process of DNA repair. It may act with RecF and RecO. The protein is Recombination protein RecR of Streptococcus gordonii (strain Challis / ATCC 35105 / BCRC 15272 / CH1 / DL1 / V288).